We begin with the raw amino-acid sequence, 202 residues long: Na(+)-translocating NADH-quinone reductase subunit E (202 aa).

Helical transmembrane passes span 11–31 (SVFIENMALSFFLGMCTFLAV), 35–55 (VTTAMGLGVAVIVVLAISVPA), 79–99 (LSFLKFITFIGVIAALVQILE), 114–134 (GIFLPLITVNCAIFGAVAFMV), 144–164 (LVFGVGSGIGWALAIVLLAAV), and 180–200 (LGITFISAGLMALGFMSFSGV).

The protein belongs to the NqrDE/RnfAE family. As to quaternary structure, composed of six subunits; NqrA, NqrB, NqrC, NqrD, NqrE and NqrF.

The protein resides in the cell inner membrane. The enzyme catalyses a ubiquinone + n Na(+)(in) + NADH + H(+) = a ubiquinol + n Na(+)(out) + NAD(+). In terms of biological role, NQR complex catalyzes the reduction of ubiquinone-1 to ubiquinol by two successive reactions, coupled with the transport of Na(+) ions from the cytoplasm to the periplasm. NqrA to NqrE are probably involved in the second step, the conversion of ubisemiquinone to ubiquinol. The sequence is that of Na(+)-translocating NADH-quinone reductase subunit E from Shewanella denitrificans (strain OS217 / ATCC BAA-1090 / DSM 15013).